An 89-amino-acid chain; its full sequence is Small ribosomal subunit protein uS19 (89 aa).

The protein belongs to the universal ribosomal protein uS19 family.

Its function is as follows. Protein S19 forms a complex with S13 that binds strongly to the 16S ribosomal RNA. The polypeptide is Small ribosomal subunit protein uS19 (Azobacteroides pseudotrichonymphae genomovar. CFP2).